Here is a 1397-residue protein sequence, read N- to C-terminus: ABC transporter B family member 2 (1397 aa).

The segment at 1–117 (MSDKSNDGGE…KLDEGEKKEG (117 aa)) is disordered. Over residues 24–39 (IDDENNNDINNQDDNE) the composition is skewed to acidic residues. Positions 37–69 (DNENNNNNNNNKNSDDNEENLKDYKNKKEDFGN) form a coiled coil. Basic and acidic residues-rich tracts occupy residues 49–79 (NSDD…DDRP) and 107–117 (KKLDEGEKKEG). 5 consecutive transmembrane segments (helical) span residues 137-157 (ILLM…MPAI), 191-211 (FIYI…FWML), 273-293 (FICG…VIFA), 369-389 (GIGI…SFWY), and 407-427 (WQGG…MALG). The 299-residue stretch at 140–438 (MIIGTIGALA…ASPNVASFAN (299 aa)) folds into the ABC transmembrane type-1 1 domain. An ABC transporter 1 domain is found at 474–710 (IEYRNIGFSY…NGVYTQLVNR (237 aa)). ATP is bound at residue 509–516 (GDSGGGKS). Disordered regions lie at residues 710-744 (RQQK…SSIS) and 763-783 (GLVN…PQEK). Positions 735 to 744 (NNNIGPSSIS) are enriched in low complexity. Helical transmembrane passes span 801–821 (FLIG…FSII), 846–866 (LWFI…IYCF), 922–942 (LGLL…AFVS), 948–968 (LVVL…MDFF), 1028–1048 (GLSF…TYWY), and 1101–1121 (VFFA…FMPD). In terms of domain architecture, ABC transmembrane type-1 2 spans 801-1124 (FLIGLVGATL…SMAFMPDLGK (324 aa)). The ABC transporter 2 domain maps to 1159–1395 (IEFKDIKFSY…NGFYAELVSR (237 aa)). 1194–1201 (GNSGGGKS) contacts ATP.

This sequence belongs to the ABC transporter superfamily. ABCB family. Multidrug resistance exporter (TC 3.A.1.201) subfamily.

It is found in the membrane. The protein is ABC transporter B family member 2 (abcB2) of Dictyostelium discoideum (Social amoeba).